We begin with the raw amino-acid sequence, 297 residues long: Phosphatidylinositol N-acetylglucosaminyltransferase subunit C (297 aa).

4 helical membrane passes run 67 to 87 (VFVV…WLFG), 88 to 108 (TGLA…GGEG), 153 to 173 (AVFM…AAIV), and 239 to 259 (ALGG…LLLI).

This sequence belongs to the PIGC family. Component of the glycosylphosphatidylinositol-N-acetylglucosaminyltransferase (GPI-GnT) complex composed at least by PIGA, PIGC, PIGH, PIGP, PIGQ, PIGY and DPM2. Interacts with PIGQ. Interacts with the heterodimer PIGA:PIGH.

It is found in the endoplasmic reticulum membrane. Its pathway is glycolipid biosynthesis; glycosylphosphatidylinositol-anchor biosynthesis. Its function is as follows. Part of the glycosylphosphatidylinositol-N-acetylglucosaminyltransferase (GPI-GnT) complex that catalyzes the transfer of N-acetylglucosamine from UDP-N-acetylglucosamine to phosphatidylinositol and participates in the first step of GPI biosynthesis. The protein is Phosphatidylinositol N-acetylglucosaminyltransferase subunit C of Bos taurus (Bovine).